Here is a 353-residue protein sequence, read N- to C-terminus: Rhodopsin (353 aa).

The Extracellular segment spans residues 1 to 36 (MNGTEGENFYIPFSNKTGLARSPFEYPQYYLAEPWK). N-linked (GlcNAc...) asparagine glycans are attached at residues asparagine 2 and asparagine 15. A helical transmembrane segment spans residues 37–61 (YSVLAAYMFFLILVGFPVNFLTLFV). At 62–73 (TVQHKKLRTPLN) the chain is on the cytoplasmic side. The helical transmembrane segment at 74-96 (YILLNLAVANLFMVLFGFTLTMY) threads the bilayer. Topologically, residues 97-110 (SSMNGYFVFGPTMC) are extracellular. An intrachain disulfide couples cysteine 110 to cysteine 187. The chain crosses the membrane as a helical span at residues 111-133 (NFEGFFATLGGEMSLWSLVVLAI). The 'Ionic lock' involved in activated form stabilization motif lies at 134–136 (ERY). The Cytoplasmic segment spans residues 134-152 (ERYIVICKPMGNFRFGSTH). Residues 153–173 (AYMGVAFTWFMALSCAAPPLV) form a helical membrane-spanning segment. Residues 174 to 202 (GWSRYLPEGMQCSCGPDYYTLNPNFNNES) are Extracellular-facing. A helical transmembrane segment spans residues 203-224 (FVIYMFLVHFIIPFIVIFFCYG). Over 225–252 (RLLCTVKEAAAAQQESASTQKAEKEVTR) the chain is Cytoplasmic. A helical transmembrane segment spans residues 253–274 (MVVLMVIGFLVCWVPYASVAFY). Residues 275-286 (IFTHQGSDFGAT) lie on the Extracellular side of the membrane. A helical membrane pass occupies residues 287-308 (FMTVPAFFAKTSALYNPIIYIL). Lysine 296 carries the post-translational modification N6-(retinylidene)lysine. Residues 309–353 (MNKQFRNCMITTLCCGKNPLGDEDSGASTSKTEVSSVSTSQVSPA) are Cytoplasmic-facing. Residues 330-353 (DEDSGASTSKTEVSSVSTSQVSPA) are disordered. Residues 336–353 (STSKTEVSSVSTSQVSPA) are compositionally biased toward low complexity.

It belongs to the G-protein coupled receptor 1 family. Opsin subfamily. Post-translationally, phosphorylated on some or all of the serine and threonine residues present in the C-terminal region. In terms of processing, contains one covalently linked retinal chromophore.

The protein resides in the membrane. Its subcellular location is the cell projection. It is found in the cilium. It localises to the photoreceptor outer segment. Photoreceptor required for image-forming vision at low light intensity. While most salt water fish species use retinal as chromophore, most freshwater fish use 3-dehydroretinal, or a mixture of retinal and 3-dehydroretinal. Light-induced isomerization of 11-cis to all-trans retinal triggers a conformational change that activates signaling via G-proteins. Subsequent receptor phosphorylation mediates displacement of the bound G-protein alpha subunit by arrestin and terminates signaling. This is Rhodopsin (RHO) from Petromyzon marinus (Sea lamprey).